The chain runs to 283 residues: Cuticle collagen 49 (283 aa).

The signal sequence occupies residues Met-1–Cys-19. A disordered region spans residues Glu-90–Ala-283. The span at Val-127–Ile-139 shows a compositional bias: basic and acidic residues. The segment covering Ala-143–Leu-155 has biased composition (pro residues). Residues Gln-185–Gly-204 show a composition bias toward low complexity. A Collagen-like domain is found at Gly-213–Glu-271. Basic and acidic residues predominate over residues Arg-244–Asp-257.

This sequence belongs to the cuticular collagen family. In terms of assembly, collagen polypeptide chains are complexed within the cuticle by disulfide bonds and other types of covalent cross-links.

Probable cuticular collagen-like protein. Nematode cuticles are composed largely of collagen-like proteins. The cuticle functions both as an exoskeleton and as a barrier to protect the worm from its environment. Acts downstream of the Wnt signaling pathway, perhaps in the formation of the adult cuticle. In Caenorhabditis elegans, this protein is Cuticle collagen 49.